The chain runs to 177 residues: Large ribosomal subunit protein uL6 (177 aa).

This sequence belongs to the universal ribosomal protein uL6 family. In terms of assembly, part of the 50S ribosomal subunit.

Its function is as follows. This protein binds to the 23S rRNA, and is important in its secondary structure. It is located near the subunit interface in the base of the L7/L12 stalk, and near the tRNA binding site of the peptidyltransferase center. This chain is Large ribosomal subunit protein uL6, found in Cupriavidus metallidurans (strain ATCC 43123 / DSM 2839 / NBRC 102507 / CH34) (Ralstonia metallidurans).